The primary structure comprises 329 residues: Ketol-acid reductoisomerase (NADP(+)) (329 aa).

Residues 2–182 enclose the KARI N-terminal Rossmann domain; it reads TQLFYDTDAD…GGTRAGILET (181 aa). NADP(+)-binding positions include 25–28, Ser-51, Ser-53, and 83–86; these read YGSQ and DEFQ. The active site involves His-108. Gly-134 contacts NADP(+). The KARI C-terminal knotted domain maps to 183 to 328; that stretch reads NFKEETETDL…KGLRSMFSWL (146 aa). The Mg(2+) site is built by Asp-191, Glu-195, Glu-227, and Glu-231. Ser-252 contacts substrate.

Belongs to the ketol-acid reductoisomerase family. The cofactor is Mg(2+).

The catalysed reaction is (2R)-2,3-dihydroxy-3-methylbutanoate + NADP(+) = (2S)-2-acetolactate + NADPH + H(+). The enzyme catalyses (2R,3R)-2,3-dihydroxy-3-methylpentanoate + NADP(+) = (S)-2-ethyl-2-hydroxy-3-oxobutanoate + NADPH + H(+). It functions in the pathway amino-acid biosynthesis; L-isoleucine biosynthesis; L-isoleucine from 2-oxobutanoate: step 2/4. It participates in amino-acid biosynthesis; L-valine biosynthesis; L-valine from pyruvate: step 2/4. Involved in the biosynthesis of branched-chain amino acids (BCAA). Catalyzes an alkyl-migration followed by a ketol-acid reduction of (S)-2-acetolactate (S2AL) to yield (R)-2,3-dihydroxy-isovalerate. In the isomerase reaction, S2AL is rearranged via a Mg-dependent methyl migration to produce 3-hydroxy-3-methyl-2-ketobutyrate (HMKB). In the reductase reaction, this 2-ketoacid undergoes a metal-dependent reduction by NADPH to yield (R)-2,3-dihydroxy-isovalerate. The sequence is that of Ketol-acid reductoisomerase (NADP(+)) from Prochlorococcus marinus (strain MIT 9215).